The following is a 407-amino-acid chain: Ribonuclease Z (407 aa).

Residues 1–308 (MEITFLGTSS…QDFLHYAIPR (308 aa)) are ribonuclease Z. Zn(2+) contacts are provided by His62, His64, Asp66, His67, His139, Asp210, and His268. Asp66 acts as the Proton acceptor in catalysis. A unknown region spans residues 309–407 (DGQICAEMPP…VDWSALNVLF (99 aa)).

The protein belongs to the RNase Z family. As to quaternary structure, homodimer. Zn(2+) serves as cofactor.

It catalyses the reaction Endonucleolytic cleavage of RNA, removing extra 3' nucleotides from tRNA precursor, generating 3' termini of tRNAs. A 3'-hydroxy group is left at the tRNA terminus and a 5'-phosphoryl group is left at the trailer molecule.. Zinc phosphodiesterase, which displays some tRNA 3'-processing endonuclease activity. Probably involved in tRNA maturation, by removing a 3'-trailer from precursor tRNA. The sequence is that of Ribonuclease Z (rnz) from Thermosynechococcus vestitus (strain NIES-2133 / IAM M-273 / BP-1).